We begin with the raw amino-acid sequence, 245 residues long: 2,3-bisphosphoglycerate-dependent phosphoglycerate mutase 1 (245 aa).

Residues 8-15 (RHGQSLWN), 21-22 (TG), arginine 60, 87-90 (ERHY), lysine 98, 114-115 (RR), and 183-184 (GN) each bind substrate. Catalysis depends on histidine 9, which acts as the Tele-phosphohistidine intermediate. Glutamate 87 serves as the catalytic Proton donor/acceptor.

Belongs to the phosphoglycerate mutase family. BPG-dependent PGAM subfamily.

It carries out the reaction (2R)-2-phosphoglycerate = (2R)-3-phosphoglycerate. The protein operates within carbohydrate degradation; glycolysis; pyruvate from D-glyceraldehyde 3-phosphate: step 3/5. Catalyzes the interconversion of 2-phosphoglycerate and 3-phosphoglycerate. This Bacillus cereus (strain ATCC 10987 / NRS 248) protein is 2,3-bisphosphoglycerate-dependent phosphoglycerate mutase 1.